A 420-amino-acid polypeptide reads, in one-letter code: Lactosylceramide alpha-2,3-sialyltransferase (420 aa).

Residues 1 to 39 form a disordered region; that stretch reads MRKKAAGGAERRPLKPRTEAAAAAPAGRAMPSDHSRMKL. At 1–67 the chain is on the cytoplasmic side; the sequence is MRKKAAGGAE…MRRPNLLLKD (67 aa). Basic and acidic residues predominate over residues 9-18; that stretch reads AERRPLKPRT. The span at 20–29 shows a compositional bias: low complexity; sequence AAAAAPAGRA. A helical transmembrane segment spans residues 68 to 88; sequence ILKCTLLLFGVWILFYILKLN. Over 89–420 the chain is Lumenal; it reads HTTEECDMKR…DLSGGIHSEF (332 aa). Cysteine 197 and cysteine 355 are disulfide-bonded. Asparagine 238 carries an N-linked (GlcNAc...) asparagine glycan.

It belongs to the glycosyltransferase 29 family.

The protein resides in the golgi apparatus membrane. The catalysed reaction is a beta-D-Gal-(1-&gt;4)-beta-D-Glc-(1&lt;-&gt;1)-Cer(d18:1(4E)) + CMP-N-acetyl-beta-neuraminate = a ganglioside GM3 (d18:1(4E)) + CMP + H(+). It catalyses the reaction ganglioside GA2 (d18:1(4E)/18:0) + CMP-N-acetyl-beta-neuraminate = ganglioside GM2 (d18:1(4E)/18:0) + CMP + H(+). It carries out the reaction a beta-D-Gal-(1&lt;-&gt;1')-ceramide + CMP-N-acetyl-beta-neuraminate = N-acetyl-alpha-neuraminosyl-(2-&gt;3)-beta-D-galactosyl-(1&lt;-&gt;1')-ceramide + CMP + H(+). The enzyme catalyses ganglioside GA1 (d18:1(4E)/18:0) + CMP-N-acetyl-beta-neuraminate = ganglioside GM1 (d18:1(4E)/18:0) + CMP + H(+). Transfers the sialyl group (N-acetyl-alpha-neuraminyl or NeuAc) from CMP-NeuAc to the non-reducing terminal galactose (Gal) of glycosphingolipids forming gangliosides (important molecules involved in the regulation of multiple cellular processes, including cell proliferation and differentiation, apoptosis, embryogenesis, development, and oncogenesis). Mainly involved in the biosynthesis of ganglioside GM3 but can also use different glycolipids as substrate acceptors such as D-galactosylceramide (GalCer), asialo-GM2 (GA2) and asialo-GM1 (GA1), although less preferentially than beta-D-Gal-(1-&gt;4)-beta-D-Glc-(1&lt;-&gt;1)-Cer (LacCer). The protein is Lactosylceramide alpha-2,3-sialyltransferase (ST3GAL5) of Bos taurus (Bovine).